The primary structure comprises 273 residues: MTNRQWETLREYDEIKYEFYEGIAKVTINRPEVRNAFTPKTVAEMIDAFSRARDDQNVSVIVLTGEGDLAFCSGGDQKKRGHGGYVGEDQIPRLNVLDLQRLIRIIPKPVIAMVKGYAVGGGNVLNVVCDLTIAADNAIFGQTGPKVGSFDAGYGSGYLARIVGHKKAREIWYLCRQYNAQEALDMGLVNTVVPLDKVEDETVQWCKEIMKHSPTALRFLKAAMNADTDGLAGLQQMAGDATLLYYTTDEAKEGRDAFKEKRDPDFDQFPKFP.

Substrate-binding positions include Arg34, 73 to 77 (SGGDQ), Tyr85, 117 to 121 (YAVGG), Thr143, Ser149, Tyr246, and Lys261. 142–144 (QTG) serves as a coordination point for hydrogencarbonate. The span at 254 to 265 (GRDAFKEKRDPD) shows a compositional bias: basic and acidic residues. The segment at 254 to 273 (GRDAFKEKRDPDFDQFPKFP) is disordered.

This sequence belongs to the enoyl-CoA hydratase/isomerase family. MenB subfamily. The cofactor is hydrogencarbonate.

The catalysed reaction is 2-succinylbenzoyl-CoA + H(+) = 1,4-dihydroxy-2-naphthoyl-CoA + H2O. Its pathway is quinol/quinone metabolism; 1,4-dihydroxy-2-naphthoate biosynthesis; 1,4-dihydroxy-2-naphthoate from chorismate: step 6/7. It participates in quinol/quinone metabolism; menaquinone biosynthesis. Its function is as follows. Converts o-succinylbenzoyl-CoA (OSB-CoA) to 1,4-dihydroxy-2-naphthoyl-CoA (DHNA-CoA). The protein is 1,4-dihydroxy-2-naphthoyl-CoA synthase of Staphylococcus aureus (strain Mu50 / ATCC 700699).